Reading from the N-terminus, the 521-residue chain is UDP-N-acetylmuramoyl-L-alanyl-D-glutamate--2,6-diaminopimelate ligase (521 aa).

Ser-33 lines the UDP-N-acetyl-alpha-D-muramoyl-L-alanyl-D-glutamate pocket. Residue 116–122 (GTNGKTT) participates in ATP binding. UDP-N-acetyl-alpha-D-muramoyl-L-alanyl-D-glutamate is bound by residues 158–159 (TT), Ser-185, Gln-191, and Arg-193. Lys-225 bears the N6-carboxylysine mark. Meso-2,6-diaminopimelate is bound by residues Arg-409, 433–436 (DNPR), Gly-483, and Glu-487. The Meso-diaminopimelate recognition motif motif lies at 433 to 436 (DNPR).

Belongs to the MurCDEF family. MurE subfamily. The cofactor is Mg(2+). Carboxylation is probably crucial for Mg(2+) binding and, consequently, for the gamma-phosphate positioning of ATP.

Its subcellular location is the cytoplasm. It carries out the reaction UDP-N-acetyl-alpha-D-muramoyl-L-alanyl-D-glutamate + meso-2,6-diaminopimelate + ATP = UDP-N-acetyl-alpha-D-muramoyl-L-alanyl-gamma-D-glutamyl-meso-2,6-diaminopimelate + ADP + phosphate + H(+). The protein operates within cell wall biogenesis; peptidoglycan biosynthesis. Catalyzes the addition of meso-diaminopimelic acid to the nucleotide precursor UDP-N-acetylmuramoyl-L-alanyl-D-glutamate (UMAG) in the biosynthesis of bacterial cell-wall peptidoglycan. The chain is UDP-N-acetylmuramoyl-L-alanyl-D-glutamate--2,6-diaminopimelate ligase from Nitrosomonas europaea (strain ATCC 19718 / CIP 103999 / KCTC 2705 / NBRC 14298).